A 404-amino-acid chain; its full sequence is Sulfate adenylyltransferase (404 aa).

This sequence belongs to the sulfate adenylyltransferase family.

It carries out the reaction sulfate + ATP + H(+) = adenosine 5'-phosphosulfate + diphosphate. The protein operates within sulfur metabolism; hydrogen sulfide biosynthesis; sulfite from sulfate: step 1/3. This is Sulfate adenylyltransferase from Chlorobaculum tepidum (strain ATCC 49652 / DSM 12025 / NBRC 103806 / TLS) (Chlorobium tepidum).